We begin with the raw amino-acid sequence, 365 residues long: Bifunctional chorismate mutase/prephenate dehydratase (365 aa).

In terms of domain architecture, Chorismate mutase spans 1 to 96 (MSEADQLKAL…SCLALEQPLR (96 aa)). Substrate contacts are provided by Arg-11, Arg-28, Lys-39, and Glu-57. The region spanning 97 to 272 (VAYLGPEGTF…NSTRFLIIGS (176 aa)) is the Prephenate dehydratase domain. Residues 284–361 (SIIVSMRNKP…VALKVLGSYP (78 aa)) form the ACT domain.

It localises to the cytoplasm. It carries out the reaction chorismate = prephenate. The catalysed reaction is prephenate + H(+) = 3-phenylpyruvate + CO2 + H2O. It participates in amino-acid biosynthesis; L-phenylalanine biosynthesis; phenylpyruvate from prephenate: step 1/1. It functions in the pathway metabolic intermediate biosynthesis; prephenate biosynthesis; prephenate from chorismate: step 1/1. Its function is as follows. Catalyzes the Claisen rearrangement of chorismate to prephenate and the decarboxylation/dehydration of prephenate to phenylpyruvate. The protein is Bifunctional chorismate mutase/prephenate dehydratase of Stutzerimonas stutzeri (Pseudomonas stutzeri).